The primary structure comprises 66 residues: Large ribosomal subunit protein uL29 (66 aa).

This sequence belongs to the universal ribosomal protein uL29 family.

The chain is Large ribosomal subunit protein uL29 from Kosmotoga olearia (strain ATCC BAA-1733 / DSM 21960 / TBF 19.5.1).